A 286-amino-acid chain; its full sequence is Putative type II secretion system L-type protein YghE (286 aa).

A helical transmembrane segment spans residues 136–156 (VMILPILLILVALAVERGVTL).

It belongs to the GSP L family.

It is found in the cell inner membrane. Involved in a type II secretion system (T2SS, formerly general secretion pathway, GSP) for the export of folded proteins across the outer membrane. This Escherichia coli (strain K12) protein is Putative type II secretion system L-type protein YghE.